A 276-amino-acid chain; its full sequence is Large ribosomal subunit protein uL2 (276 aa).

Residues 210–276 (GRNRHRGIRP…KLIISRRKGK (67 aa)) are disordered. Residues 230 to 240 (DHPHGGGEGKK) are compositionally biased toward basic and acidic residues. Residues 255–276 (KGAKTRRKKASDKLIISRRKGK) show a composition bias toward basic residues.

The protein belongs to the universal ribosomal protein uL2 family. In terms of assembly, part of the 50S ribosomal subunit. Forms a bridge to the 30S subunit in the 70S ribosome.

Functionally, one of the primary rRNA binding proteins. Required for association of the 30S and 50S subunits to form the 70S ribosome, for tRNA binding and peptide bond formation. It has been suggested to have peptidyltransferase activity; this is somewhat controversial. Makes several contacts with the 16S rRNA in the 70S ribosome. This Campylobacter jejuni subsp. jejuni serotype O:6 (strain 81116 / NCTC 11828) protein is Large ribosomal subunit protein uL2.